The primary structure comprises 343 residues: S-adenosylmethionine:tRNA ribosyltransferase-isomerase (343 aa).

The protein belongs to the QueA family. As to quaternary structure, monomer.

It is found in the cytoplasm. The catalysed reaction is 7-aminomethyl-7-carbaguanosine(34) in tRNA + S-adenosyl-L-methionine = epoxyqueuosine(34) in tRNA + adenine + L-methionine + 2 H(+). It participates in tRNA modification; tRNA-queuosine biosynthesis. In terms of biological role, transfers and isomerizes the ribose moiety from AdoMet to the 7-aminomethyl group of 7-deazaguanine (preQ1-tRNA) to give epoxyqueuosine (oQ-tRNA). The sequence is that of S-adenosylmethionine:tRNA ribosyltransferase-isomerase from Geobacter metallireducens (strain ATCC 53774 / DSM 7210 / GS-15).